The sequence spans 354 residues: Guanine nucleotide-binding protein G(o) subunit alpha (354 aa).

The N-myristoyl glycine moiety is linked to residue Gly-2. A lipid anchor (S-palmitoyl cysteine) is attached at Cys-3. The region spanning 32-354 is the G-alpha domain; it reads KDIKLLLLGA…ANNLRGCGLY (323 aa). The segment at 35–48 is G1 motif; that stretch reads KLLLLGAGESGKST. GTP is bound by residues 40–47, 176–182, 201–205, 270–273, and Ala-326; these read GAGESGKS, LRTRVKT, DVGGQ, and NKKD. Mg(2+) is bound by residues Ser-47 and Thr-182. The G2 motif stretch occupies residues 174-182; it reads DILRTRVKT. The tract at residues 197 to 206 is G3 motif; sequence FKLFDVGGQR. The tract at residues 266-273 is G4 motif; the sequence is ILFLNKKD. The interval 324–329 is G5 motif; that stretch reads TCATDT.

Belongs to the G-alpha family. G(i/o/t/z) subfamily. As to quaternary structure, g proteins are composed of 3 units; alpha, beta and gamma. The alpha chain contains the guanine nucleotide binding site.

In terms of biological role, guanine nucleotide-binding proteins (G proteins) are involved as modulators or transducers in various transmembrane signaling systems. The G(o) protein function is not clear. In Planorbella trivolvis (Marsh rams-horn), this protein is Guanine nucleotide-binding protein G(o) subunit alpha.